A 361-amino-acid polypeptide reads, in one-letter code: Arginine N(omega)-methyltransferase (361 aa).

Positions 1–17 (MRHVQEARAVPAEHEAR) are enriched in basic and acidic residues. The disordered stretch occupies residues 1–24 (MRHVQEARAVPAEHEARPAPVTMP). An SAM-dependent MTase PRMT-type domain is found at 65-361 (DADAFAQIAR…WSDFTLRVSI (297 aa)).

The protein belongs to the class I-like SAM-binding methyltransferase superfamily. Protein arginine N-methyltransferase family.

It catalyses the reaction L-arginine + S-adenosyl-L-methionine = N(omega)-methyl-L-arginine + S-adenosyl-L-homocysteine + H(+). The protein operates within antibiotic biosynthesis. Functionally, involved in the biosynthesis of the glucosamine-nitrosourea antibiotic streptozotocin (SZN). Catalyzes the conversion of L-arginine to N(omega)-methyl-L-arginine (L-NMA), using S-adenosyl-L-methionine (SAM) as a methyl donor. The sequence is that of Arginine N(omega)-methyltransferase from Streptomyces achromogenes subsp. streptozoticus.